Consider the following 151-residue polypeptide: D-ribose pyranase 1 (151 aa).

H20 (proton donor) is an active-site residue. Substrate-binding positions include D28, H98, and 121-123 (WGN).

Belongs to the RbsD / FucU family. RbsD subfamily. Homodecamer.

The protein resides in the cytoplasm. The enzyme catalyses beta-D-ribopyranose = beta-D-ribofuranose. Its pathway is carbohydrate metabolism; D-ribose degradation; D-ribose 5-phosphate from beta-D-ribopyranose: step 1/2. Functionally, catalyzes the interconversion of beta-pyran and beta-furan forms of D-ribose. The polypeptide is D-ribose pyranase 1 (Streptomyces griseus subsp. griseus (strain JCM 4626 / CBS 651.72 / NBRC 13350 / KCC S-0626 / ISP 5235)).